Consider the following 179-residue polypeptide: Peptidyl-prolyl cis-trans isomerase H (179 aa).

One can recognise a PPIase cyclophilin-type domain in the interval 16–178 (FFDISIGDTP…LQVRIAECGE (163 aa)).

Belongs to the cyclophilin-type PPIase family. PPIase H subfamily.

It localises to the nucleus. It catalyses the reaction [protein]-peptidylproline (omega=180) = [protein]-peptidylproline (omega=0). Functionally, PPIases accelerate the folding of proteins. It catalyzes the cis-trans isomerization of proline imidic peptide bonds in oligopeptides. This chain is Peptidyl-prolyl cis-trans isomerase H (CYP3), found in Cryptococcus neoformans var. neoformans serotype D (strain B-3501A) (Filobasidiella neoformans).